The following is a 334-amino-acid chain: G2/mitotic-specific cyclin-1 (334 aa).

It belongs to the cyclin family. Cyclin AB subfamily.

Essential for the control of the cell cycle at the G2/M (mitosis) transition. The sequence is that of G2/mitotic-specific cyclin-1 (CYC1) from Trypanosoma brucei brucei.